The primary structure comprises 639 residues: PTS-dependent dihydroxyacetone kinase operon regulatory protein (639 aa).

The segment at 1-318 (MSGAFNNDGR…MRQLMTSQLG (318 aa)) is sensor domain. Residues 52 to 189 (AMLTLGQAAL…AIAREVGNLL (138 aa)) enclose the GAF domain. One can recognise a PAS domain in the interval 203–265 (NQLNALLESM…AVLQQAIKQA (63 aa)). In terms of domain architecture, Sigma-54 factor interaction spans 327–552 (MPQDDPQTRR…LYSVIENLAL (226 aa)). ATP contacts are provided by residues 355–362 (GEEGVGKA) and 415–424 (AHGGTLFLEK).

In terms of assembly, homodimer. DhaR forms complexes with DhaK and DhaL-ADP.

Positively regulates the dhaKLM operon from a sigma-70 promoter. Represses its own expression. This chain is PTS-dependent dihydroxyacetone kinase operon regulatory protein, found in Escherichia coli (strain K12).